Consider the following 156-residue polypeptide: Lipoprotein signal peptidase (156 aa).

3 helical membrane-spanning segments follow: residues 5 to 25 (FFVVYLIAALVIAVDQWTKQW), 63 to 83 (IEWQFWLFFAAAVTAVLAIIA), and 90 to 110 (SNPYLFTGFGLIMGGAIGNLI). Residues aspartate 120 and aspartate 138 contribute to the active site. The helical transmembrane segment at 133-153 (AFNVADMGICVGAFFVCLAVY) threads the bilayer.

Belongs to the peptidase A8 family.

The protein localises to the cell inner membrane. It carries out the reaction Release of signal peptides from bacterial membrane prolipoproteins. Hydrolyzes -Xaa-Yaa-Zaa-|-(S,diacylglyceryl)Cys-, in which Xaa is hydrophobic (preferably Leu), and Yaa (Ala or Ser) and Zaa (Gly or Ala) have small, neutral side chains.. It functions in the pathway protein modification; lipoprotein biosynthesis (signal peptide cleavage). Its function is as follows. This protein specifically catalyzes the removal of signal peptides from prolipoproteins. The chain is Lipoprotein signal peptidase from Oleidesulfovibrio alaskensis (strain ATCC BAA-1058 / DSM 17464 / G20) (Desulfovibrio alaskensis).